A 201-amino-acid polypeptide reads, in one-letter code: 3-isopropylmalate dehydratase small subunit (201 aa).

This sequence belongs to the LeuD family. LeuD type 1 subfamily. Heterodimer of LeuC and LeuD.

It carries out the reaction (2R,3S)-3-isopropylmalate = (2S)-2-isopropylmalate. It functions in the pathway amino-acid biosynthesis; L-leucine biosynthesis; L-leucine from 3-methyl-2-oxobutanoate: step 2/4. Functionally, catalyzes the isomerization between 2-isopropylmalate and 3-isopropylmalate, via the formation of 2-isopropylmaleate. The sequence is that of 3-isopropylmalate dehydratase small subunit from Shewanella sp. (strain MR-4).